The following is a 477-amino-acid chain: (R)-2-hydroxyglutaryl-CoA dehydratase, subunit alpha (477 aa).

The protein belongs to the FldB/FldC dehydratase alpha/beta subunit family. As to quaternary structure, the (R)-2-hydroxyglutaryl-CoA dehydratase enzyme system is a heterodimer composed of an alpha subunit (HgdA) and a beta subunit (HgdB). The cofactor is [4Fe-4S] cluster. Requires FMN as cofactor. Mg(2+) is required as a cofactor.

Its subcellular location is the cytoplasm. It carries out the reaction (R)-2-hydroxyglutaryl-CoA = (2E)-glutaconyl-CoA + H2O. Its pathway is amino-acid degradation; L-glutamate degradation via hydroxyglutarate pathway; crotonoyl-CoA from L-glutamate: step 4/5. Activated by the HgdC. Reversibly inactivated by oxidants such as 2-nitrophenol, 3-nitrophenol, 4-nitrophenol, 4-nitrobenzoate, carbonyl cyanide 4-(trifluoromethoxy)phenylhydrazone (FCCP) and chloramphenicol. Irreversibly inactivated by oxidants such as hydroxylamine and nitrite. Involved in the fermentation of L-glutamate via the hydroxyglutarate pathway. Catalyzes the reversible syn-elimination of water from (R)-2-hydroxyglutaryl-CoA to yield (E)-glutaconyl-CoA. The dehydration mechanism involves a transient one electron reduction of the thioester from (R)-2-hydroxyglutaryl-CoA, generating a ketyl radical. Prior to (E)-glutaconyl-CoA formation, the ketyl radical is subsequently reoxidized by electron transfer back to the HgdA-HgdB complex (CompD) to avoid change in oxidation state of the substrate. The appropriate redox state of dehydratase HgdA-HgdB complex (CompD) is maintained by HgdC (CompA) via hydrolysis of ATP and ATP-dependent electron transfer. Since the electron is recycled, the dehydratase is able to perform several turnovers with only catalytic amounts of ATP and substoichiometric amounts of HgdC (CompA). The chain is (R)-2-hydroxyglutaryl-CoA dehydratase, subunit alpha from Acidaminococcus fermentans (strain ATCC 25085 / DSM 20731 / CCUG 9996 / CIP 106432 / VR4).